Consider the following 121-residue polypeptide: Basic phospholipase A2 CoaTx-II (121 aa).

Intrachain disulfides connect Cys26–Cys115, Cys28–Cys44, Cys43–Cys95, Cys49–Cys121, Cys50–Cys88, Cys57–Cys81, and Cys75–Cys86. The important for membrane-damaging activities in eukaryotes and bacteria; heparin-binding stretch occupies residues 105-117 (KKYRIYPKFLCKK).

Belongs to the phospholipase A2 family. Group II subfamily. K49 sub-subfamily. In terms of assembly, homodimer; non-covalently-linked. In terms of tissue distribution, expressed by the venom gland.

Its subcellular location is the secreted. In terms of biological role, snake venom phospholipase A2 (PLA2) that lacks enzymatic inactivity. It shows antibacterial activity against both Gram-negative and Gram-positive bacteria, including methicillin-resistant strains. In vivo, it causes local muscular damage, but no systemic damage (intravenous administration does not elevate plasma creatine kinase). Also causes an inflammatory activity that is demonstrated by mice paw edema induction and pro-inflammatory cytokine IL-6 elevation. A model of myotoxic mechanism has been proposed: an apo Lys49-PLA2 is activated by the entrance of a hydrophobic molecule (e.g. fatty acid) at the hydrophobic channel of the protein leading to a reorientation of a monomer. This reorientation causes a transition between 'inactive' to 'active' states, causing alignment of C-terminal and membrane-docking sites (MDoS) side-by-side and putting the membrane-disruption sites (MDiS) in the same plane, exposed to solvent and in a symmetric position for both monomers. The MDoS region stabilizes the toxin on membrane by the interaction of charged residues with phospholipid head groups. Subsequently, the MDiS region destabilizes the membrane with penetration of hydrophobic residues. This insertion causes a disorganization of the membrane, allowing an uncontrolled influx of ions (i.e. calcium and sodium), and eventually triggering irreversible intracellular alterations and cell death. This chain is Basic phospholipase A2 CoaTx-II, found in Crotalus lutosus abyssus (Grand Canyon rattlesnake).